Reading from the N-terminus, the 50-residue chain is Fungus-induced-related protein 15 (50 aa).

The N-terminal stretch at 1-21 (MNFYSLFVFIALIFSFNVVHG) is a signal peptide.

Functionally, may have role in hypoxia response. This is Fungus-induced-related protein 15 (fipr-15) from Caenorhabditis elegans.